The chain runs to 488 residues: UDP-N-acetylmuramoyl-L-alanyl-D-glutamate--2,6-diaminopimelate ligase (488 aa).

Residues Leu24, Ser26, and 41 to 43 (HQV) contribute to the UDP-N-acetyl-alpha-D-muramoyl-L-alanyl-D-glutamate site. 113–119 (GTNGKTT) provides a ligand contact to ATP. Residues Asn154, 155–156 (TT), Ser182, Gln188, and Arg190 each bind UDP-N-acetyl-alpha-D-muramoyl-L-alanyl-D-glutamate. Lys222 is subject to N6-carboxylysine. Residues Arg386, 410-413 (DNPR), Gly461, and Glu465 contribute to the meso-2,6-diaminopimelate site. Residues 410 to 413 (DNPR) carry the Meso-diaminopimelate recognition motif motif.

Belongs to the MurCDEF family. MurE subfamily. Mg(2+) serves as cofactor. In terms of processing, carboxylation is probably crucial for Mg(2+) binding and, consequently, for the gamma-phosphate positioning of ATP.

Its subcellular location is the cytoplasm. It catalyses the reaction UDP-N-acetyl-alpha-D-muramoyl-L-alanyl-D-glutamate + meso-2,6-diaminopimelate + ATP = UDP-N-acetyl-alpha-D-muramoyl-L-alanyl-gamma-D-glutamyl-meso-2,6-diaminopimelate + ADP + phosphate + H(+). It participates in cell wall biogenesis; peptidoglycan biosynthesis. Catalyzes the addition of meso-diaminopimelic acid to the nucleotide precursor UDP-N-acetylmuramoyl-L-alanyl-D-glutamate (UMAG) in the biosynthesis of bacterial cell-wall peptidoglycan. The sequence is that of UDP-N-acetylmuramoyl-L-alanyl-D-glutamate--2,6-diaminopimelate ligase from Haemophilus influenzae (strain 86-028NP).